Here is an 89-residue protein sequence, read N- to C-terminus: Small ribosomal subunit protein uS15 (89 aa).

The protein belongs to the universal ribosomal protein uS15 family. Part of the 30S ribosomal subunit. Forms a bridge to the 50S subunit in the 70S ribosome, contacting the 23S rRNA.

Its function is as follows. One of the primary rRNA binding proteins, it binds directly to 16S rRNA where it helps nucleate assembly of the platform of the 30S subunit by binding and bridging several RNA helices of the 16S rRNA. Forms an intersubunit bridge (bridge B4) with the 23S rRNA of the 50S subunit in the ribosome. In Pelotomaculum thermopropionicum (strain DSM 13744 / JCM 10971 / SI), this protein is Small ribosomal subunit protein uS15.